The sequence spans 273 residues: Large ribosomal subunit protein uL2cz/uL2cy (273 aa).

Disordered stretches follow at residues 1–27 (MAKH…SNPR) and 225–273 (PVDH…RRRK).

The protein belongs to the universal ribosomal protein uL2 family. Part of the 50S ribosomal subunit.

The protein localises to the plastid. The protein resides in the chloroplast. The protein is Large ribosomal subunit protein uL2cz/uL2cy (rpl2-A) of Lolium perenne (Perennial ryegrass).